The following is a 739-amino-acid chain: tRNA 5-methylaminomethyl-2-thiouridine biosynthesis bifunctional protein MnmC (739 aa).

A tRNA (mnm(5)s(2)U34)-methyltransferase region spans residues 1–282 (MDKVTPAKLS…KREMLTATKL (282 aa)). An FAD-dependent cmnm(5)s(2)U34 oxidoreductase region spans residues 330 to 739 (IGAGVCGLMA…HRSSLKKPLS (410 aa)).

In the N-terminal section; belongs to the methyltransferase superfamily. tRNA (mnm(5)s(2)U34)-methyltransferase family. It in the C-terminal section; belongs to the DAO family. FAD is required as a cofactor.

The protein resides in the cytoplasm. The enzyme catalyses 5-aminomethyl-2-thiouridine(34) in tRNA + S-adenosyl-L-methionine = 5-methylaminomethyl-2-thiouridine(34) in tRNA + S-adenosyl-L-homocysteine + H(+). Catalyzes the last two steps in the biosynthesis of 5-methylaminomethyl-2-thiouridine (mnm(5)s(2)U) at the wobble position (U34) in tRNA. Catalyzes the FAD-dependent demodification of cmnm(5)s(2)U34 to nm(5)s(2)U34, followed by the transfer of a methyl group from S-adenosyl-L-methionine to nm(5)s(2)U34, to form mnm(5)s(2)U34. In Psychrobacter sp. (strain PRwf-1), this protein is tRNA 5-methylaminomethyl-2-thiouridine biosynthesis bifunctional protein MnmC.